We begin with the raw amino-acid sequence, 356 residues long: 3-dehydroquinate synthase (356 aa).

NAD(+) contacts are provided by residues 101-105 (GVIGD), 125-126 (TT), lysine 138, and lysine 147. The Zn(2+) site is built by glutamate 180, histidine 243, and histidine 260.

This sequence belongs to the sugar phosphate cyclases superfamily. Dehydroquinate synthase family. The cofactor is Co(2+). It depends on Zn(2+) as a cofactor. Requires NAD(+) as cofactor.

The protein localises to the cytoplasm. It carries out the reaction 7-phospho-2-dehydro-3-deoxy-D-arabino-heptonate = 3-dehydroquinate + phosphate. The protein operates within metabolic intermediate biosynthesis; chorismate biosynthesis; chorismate from D-erythrose 4-phosphate and phosphoenolpyruvate: step 2/7. Functionally, catalyzes the conversion of 3-deoxy-D-arabino-heptulosonate 7-phosphate (DAHP) to dehydroquinate (DHQ). This chain is 3-dehydroquinate synthase, found in Alkaliphilus metalliredigens (strain QYMF).